Here is a 424-residue protein sequence, read N- to C-terminus: Serine hydroxymethyltransferase (424 aa).

Residues Leu-113 and 117–119 (GHL) each bind (6S)-5,6,7,8-tetrahydrofolate. Lys-222 carries the N6-(pyridoxal phosphate)lysine modification. 361–363 (SPF) serves as a coordination point for (6S)-5,6,7,8-tetrahydrofolate.

This sequence belongs to the SHMT family. Homodimer. It depends on pyridoxal 5'-phosphate as a cofactor.

It is found in the cytoplasm. The enzyme catalyses (6R)-5,10-methylene-5,6,7,8-tetrahydrofolate + glycine + H2O = (6S)-5,6,7,8-tetrahydrofolate + L-serine. Its pathway is one-carbon metabolism; tetrahydrofolate interconversion. It participates in amino-acid biosynthesis; glycine biosynthesis; glycine from L-serine: step 1/1. In terms of biological role, catalyzes the reversible interconversion of serine and glycine with tetrahydrofolate (THF) serving as the one-carbon carrier. This reaction serves as the major source of one-carbon groups required for the biosynthesis of purines, thymidylate, methionine, and other important biomolecules. Also exhibits THF-independent aldolase activity toward beta-hydroxyamino acids, producing glycine and aldehydes, via a retro-aldol mechanism. This chain is Serine hydroxymethyltransferase, found in Flavobacterium psychrophilum (strain ATCC 49511 / DSM 21280 / CIP 103535 / JIP02/86).